The primary structure comprises 674 residues: Probable copper-transporting P-type ATPase B (674 aa).

The segment at 1–20 is disordered; that stretch reads MNHSNHMHHDNHESHHHYSG. Transmembrane regions (helical) follow at residues 32-52, 57-77, 95-115, 127-147, 284-304, and 315-335; these read FFVS…MGVN, FTFP…FFYG, GMMT…LYAF, TMDF…GHWI, GYLF…WMLI, and LVTV…PLVT. The active-site 4-aspartylphosphate intermediate is D367. Residues D565 and D569 each coordinate Mg(2+). Transmembrane regions (helical) follow at residues 623–645 and 649–671; these read LWWG…AFIG and SPAV…AFTL.

Belongs to the cation transport ATPase (P-type) (TC 3.A.3) family. Type IB subfamily.

Its subcellular location is the cell membrane. It catalyses the reaction Cu(+)(in) + ATP + H2O = Cu(+)(out) + ADP + phosphate + H(+). Involved in copper transport. This Staphylococcus haemolyticus (strain JCSC1435) protein is Probable copper-transporting P-type ATPase B (copB).